A 266-amino-acid chain; its full sequence is Ribonuclease 3 (266 aa).

The region spanning Ile-34–Gly-158 is the RNase III domain. Mg(2+) is bound at residue Glu-72. Asp-76 is an active-site residue. Mg(2+) contacts are provided by Asp-144 and Glu-147. Glu-147 is a catalytic residue. One can recognise a DRBM domain in the interval Asn-185–Asn-254.

Belongs to the ribonuclease III family. In terms of assembly, homodimer. The cofactor is Mg(2+).

It is found in the cytoplasm. The enzyme catalyses Endonucleolytic cleavage to 5'-phosphomonoester.. Its function is as follows. Digests double-stranded RNA. Involved in the processing of primary rRNA transcript to yield the immediate precursors to the large and small rRNAs (23S and 16S). Processes some mRNAs, and tRNAs when they are encoded in the rRNA operon. Processes pre-crRNA and tracrRNA of type II CRISPR loci if present in the organism. The polypeptide is Ribonuclease 3 (Rhodopirellula baltica (strain DSM 10527 / NCIMB 13988 / SH1)).